The sequence spans 427 residues: Trigger factor (427 aa).

A PPIase FKBP-type domain is found at 163-248 (GDTVVIDFVG…IHEVKAKEVP (86 aa)).

The protein belongs to the FKBP-type PPIase family. Tig subfamily.

It localises to the cytoplasm. The catalysed reaction is [protein]-peptidylproline (omega=180) = [protein]-peptidylproline (omega=0). In terms of biological role, involved in protein export. Acts as a chaperone by maintaining the newly synthesized protein in an open conformation. Functions as a peptidyl-prolyl cis-trans isomerase. The sequence is that of Trigger factor from Streptococcus pneumoniae serotype 4 (strain ATCC BAA-334 / TIGR4).